We begin with the raw amino-acid sequence, 572 residues long: METKDIEILIQKFALQNAYKHGSVPQAGAVTGKLLGTHPELRPHAKELMPIVQKVLADIGQMSQDEIKAKLSEIAPELIEELSVKKEVRRGLPPLDTSMLKPGQKVTLRIAPNPNGPPSLGNARGIIVNHEYARMYDGVFIMRFDDTDPSIKKPMIEAYTWYVEHAKWLGCPPDKVVAASDRLPLYYEQAEKLIDLGKAYVCTCDNEVFHDLKEAGKPCPHRETPPAENMEKWKKMLAGGYGGKEAVLRIKTDIAHKDPAMRDWVAFRIVTEPHPKTGTKYMVWPMLDFESAMEDHFLGVTHIIRGKDLMKTADKQKYIYRYLGWEYPHVSHWGRVRLLGFGKFSTSVMKKGIEAGEYRGWDDPQLPTVVALKRRGIEPEAIRNVMINMGVTETDIEFSMDTLYAENRKIVDPKANRYFFVPDPVVLKVNGAPFTTAKAPLHPQDHKRGFREMCVAENPEILIPKSDADNARPGDILRLKDLYNVRITGSDPLTGDYIGNDLSVLKQGAKIVQWVTREGGVPTRVIGPDGEFHGIAECDIRNELNNVVQFERFAFVRIDTINGVVLAYYTHP.

A 'HIGH' region motif is present at residues 112–122 (PNPNGPPSLGN).

It belongs to the class-I aminoacyl-tRNA synthetase family. Glutamate--tRNA ligase type 2 subfamily.

The protein resides in the cytoplasm. The catalysed reaction is tRNA(Glu) + L-glutamate + ATP = L-glutamyl-tRNA(Glu) + AMP + diphosphate. Catalyzes the attachment of glutamate to tRNA(Glu) in a two-step reaction: glutamate is first activated by ATP to form Glu-AMP and then transferred to the acceptor end of tRNA(Glu). The protein is Glutamate--tRNA ligase of Methanocella arvoryzae (strain DSM 22066 / NBRC 105507 / MRE50).